The sequence spans 1523 residues: Dicer-like protein 1 (1523 aa).

Residues 24–38 (LNLSGERTISTTEPT) are compositionally biased toward polar residues. The segment at 24–58 (LNLSGERTISTTEPTEGNDSSSEESGDNEQISTQR) is disordered. The region spanning 123 to 304 (LFERAKSQNT…ESATKLEVLL (182 aa)) is the Helicase ATP-binding domain. ATP is bound at residue 136–143 (LDTGSGKT). The DEAH box motif lies at 249 to 252 (DEAH). In terms of domain architecture, Helicase C-terminal spans 444–617 (LLRQKLIKYF…GIDSEIDSIL (174 aa)). A Dicer dsRNA-binding fold domain is found at 640–730 (ALAILARYAS…NSVYHRRLPA (91 aa)). A PAZ domain is found at 879-1007 (ELLHLVHENE…VCIEPLRISA (129 aa)). RNase III domains lie at 1031 to 1190 (IALE…LSGG) and 1241 to 1392 (GRKV…VDSD). Residues glutamate 1281, aspartate 1378, and glutamate 1381 each coordinate Mg(2+). Positions 1426-1494 (TFLQNRLTNE…SEKALSVLEN (69 aa)) constitute a DRBM domain. Residues cysteine 1438, histidine 1465, cysteine 1506, and cysteine 1508 each coordinate Zn(2+).

The protein belongs to the helicase family. Dicer subfamily. Mg(2+) is required as a cofactor. Requires Mn(2+) as cofactor.

Functionally, dicer-like endonuclease involved in cleaving double-stranded RNA in the RNA interference (RNAi) pathway. Produces 21 to 25 bp dsRNAs (siRNAs) which target the selective destruction of homologous RNAs leading to sequence-specific suppression of gene expression, called post-transcriptional gene silencing (PTGS). Part of a broad host defense response against viral infection and transposons. In Aspergillus oryzae (strain ATCC 42149 / RIB 40) (Yellow koji mold), this protein is Dicer-like protein 1 (dcl1).